Here is a 112-residue protein sequence, read N- to C-terminus: uncharacterized protein (112 aa).

Disordered regions lie at residues 1–53 and 80–112; these read MSKL…QRLK and MINQ…MLEL. Polar residues predominate over residues 8–22; it reads SALQKLIESQKNPNA. Residues 86 to 96 show a composition bias toward basic residues; sequence ETKKRKRKQKK. A compositionally biased stretch (acidic residues) spans 101-112; it reads DYGVFEEDMLEL.

It localises to the nucleus. Its subcellular location is the nucleolus. This is an uncharacterized protein from Schizosaccharomyces pombe (strain 972 / ATCC 24843) (Fission yeast).